A 211-amino-acid chain; its full sequence is Redox-sensing transcriptional repressor Rex (211 aa).

The segment at residues 18–57 (LYYRFIESLHAAGKQRVSSTELSQAVKVDSATIRRDFSYF) is a DNA-binding region (H-T-H motif). 92–97 (GVGNLG) lines the NAD(+) pocket.

It belongs to the transcriptional regulatory Rex family. In terms of assembly, homodimer.

Its subcellular location is the cytoplasm. In terms of biological role, modulates transcription in response to changes in cellular NADH/NAD(+) redox state. This chain is Redox-sensing transcriptional repressor Rex, found in Shouchella clausii (strain KSM-K16) (Alkalihalobacillus clausii).